A 195-amino-acid polypeptide reads, in one-letter code: CD70 antigen (195 aa).

The Cytoplasmic segment spans residues 1–23 (MPEEGRPCPWVRWSGTAFQRQWP). The helical; Signal-anchor for type II membrane protein transmembrane segment at 24 to 44 (WLLLVVFITVFCCWFHCSGLL) threads the bilayer. Residues 45–195 (SKQQQRLLEH…TFFGVQWICP (151 aa)) lie on the Extracellular side of the membrane. A THD domain is found at 58–193 (HTAELQLNLT…DETFFGVQWI (136 aa)). Residues Asn65 and Asn116 are each glycosylated (N-linked (GlcNAc...) asparagine). 2 cysteine pairs are disulfide-bonded: Cys117-Cys153 and Cys135-Cys170. The N-linked (GlcNAc...) asparagine glycan is linked to Asn172.

It belongs to the tumor necrosis factor family. As to quaternary structure, homotrimer. N-glycosylated. In terms of tissue distribution, very low level of expression. Detected in splenocytes and thymocytes.

The protein resides in the cell membrane. Its function is as follows. Expressed at the plasma membrane of B cells, it is the ligand of the CD27 receptor which is specifically expressed at the surface of T cells. The CD70-CD27 signaling pathway mediates antigen-specific T cell activation and expansion which in turn provides immune surveillance of B cells. The polypeptide is CD70 antigen (Mus musculus (Mouse)).